Consider the following 337-residue polypeptide: Draxin (337 aa).

The signal sequence occupies residues 1-24; sequence MLLLALLLLLELSLAGSLGPGSSA. Disordered stretches follow at residues 36–67, 107–133, and 234–261; these read GPAL…WTQD, RPYP…KRRK, and WPST…KGEP. 2 stretches are compositionally biased toward basic residues: residues 122 to 133 and 237 to 246; these read VKKRGREHKRRK and TRKKEKHRGK. Residue Asn252 is glycosylated (N-linked (GlcNAc...) asparagine).

This sequence belongs to the draxin family. In terms of assembly, interacts with LRP6.

The protein localises to the secreted. Functionally, chemorepulsive axon guidance protein required for the development of spinal cord and forebrain commissures. Acts as a chemorepulsive guidance protein for commissural axons during development. Able to inhibit or repel neurite outgrowth from dorsal spinal cord. Inhibits the stabilization of cytosolic beta-catenin (CTNNB1) via its interaction with LRP6, thereby acting as an antagonist of Wnt signaling pathway. The polypeptide is Draxin (Bos taurus (Bovine)).